The following is a 125-amino-acid chain: Small ribosomal subunit protein eS8 (125 aa).

The interval 1–35 (MQWQGRSVRKPSGGRYHTSQGKKRTEIGRAPAETH) is disordered.

Belongs to the eukaryotic ribosomal protein eS8 family. As to quaternary structure, part of the 30S ribosomal subunit.

The polypeptide is Small ribosomal subunit protein eS8 (Methanoculleus marisnigri (strain ATCC 35101 / DSM 1498 / JR1)).